The following is a 412-amino-acid chain: Peptidase T (412 aa).

Histidine 84 serves as a coordination point for Zn(2+). Residue aspartate 86 is part of the active site. Zn(2+) is bound at residue aspartate 146. Glutamate 179 (proton acceptor) is an active-site residue. Glutamate 180, aspartate 202, and histidine 385 together coordinate Zn(2+).

Belongs to the peptidase M20B family. Zn(2+) is required as a cofactor.

It localises to the cytoplasm. It catalyses the reaction Release of the N-terminal residue from a tripeptide.. In terms of biological role, cleaves the N-terminal amino acid of tripeptides. The sequence is that of Peptidase T from Haemophilus influenzae (strain ATCC 51907 / DSM 11121 / KW20 / Rd).